The sequence spans 1089 residues: MCDVLMQPVRTPRPSTNLRSKPLRPTGDGGVFPRLGRLIVRRPWVVIAFWVALAGLLAPTVPSLDAISQRHPVAILPSDAPVLVSTRQMTAAFREAGLQSVAVVVLSDAKGLGAADERSYKELVDALRRDTRDVVMLQDFVTTPPLRELMTSKDNQAWILPVGLPGDLGSTQSKQAYARVADIVEHQVAGSTLTANLTGPAATVADLNLTGQRDRSRIEFAITILLLVILLIIYGNPITMVLPLITIGMSVVVAQRLVAIAGLAGLGIANQSIIFMSGMMVGAGTDYAVFLISRYHDYLRQGADSDQAVKKALTSIGKVIAASAATVAITFLGMVFTQLGILKTVGPMLGISVAVVFFAAVTLLPALMVLTGRRGWIAPRRDLTRRFWRSSGVHIVRRPKTHLLASALVLVILAGCAGLARYNYDDRKTLPASVESSIGYAALDKHFPSNLIIPEYLFIQSSTDLRTPKALADLEQMVQRVSQVPGVAMVRGITRPAGRSLEQARTSWQAGEVGSKLDEGSKQIAVHTGDIDKLAGGANLMASKLGDVRAQVNRAISTVGGLIDALAYLQDLLGGNRVLGELEGAEKLIGSMRALGDTIDADASFVANNTEWASPVLGALDSSPMCTADPACASARTELQRLVTARDDGTLAKISELARQLQATRAVQTLAATVSGLRGALATVIRAMGSLGMSSPGGVRSKINLVNKGVNDLADGSRQLAEGVQLLVDQVKKMGFGLGEASAFLLAMKDTATTPAMAGFYIPPELLSYATGESVKAETMPSEYRDLLGGLNVDQLKKVAAAFISPDGHSIRYLIQTDLNPFSTAAMDQIDAITAAARGAQPNTALADAKVSVVGLPVVLKDTRDYSDHDLRLIIAMTVCIVLLILIVLLRAIVAPLYLIGSVIVSYLAALGIGVIVFQFLLGQEMHWSIPGLTFVILVAVGADYNMLLISRLREEAVLGVRSGVIRTVASTGGVITAAGLIMAASMYGLVFASLGSVVQGAFVLGTGLLLDTFLVRTVTVPAIAVLVGQANWWLPSSWRPATWWPLGRRRGRAQRTKRKPLLPKEEEEQSPPDDDDLIGLWLHDGLRL.

Residues 1-26 (MCDVLMQPVRTPRPSTNLRSKPLRPT) are disordered. 12 helical membrane-spanning segments follow: residues 44–64 (WVVI…VPSL), 222–242 (ITIL…TMVL), 257–277 (LVAI…IFMS), 316–336 (IGKV…GMVF), 349–369 (LGIS…ALMV), 400–420 (KTHL…AGLA), 555–575 (AIST…LLGG), 874–894 (IIAM…RAIV), 898–918 (YLIG…VIVF), 930–950 (IPGL…MLLI), 973–993 (GGVI…LVFA), and 996–1016 (GSVV…TFLV). Residues 1056-1078 (RTKRKPLLPKEEEEQSPPDDDDL) are disordered. The segment covering 1066–1078 (EEEEQSPPDDDDL) has biased composition (acidic residues).

This sequence belongs to the resistance-nodulation-cell division (RND) (TC 2.A.6) family. MmpL subfamily.

Its subcellular location is the cell membrane. The polypeptide is Probable transport protein MmpL8 (mmpL8) (Mycobacterium tuberculosis (strain ATCC 25177 / H37Ra)).